Reading from the N-terminus, the 118-residue chain is Large ribosomal subunit protein bL20 (118 aa).

This sequence belongs to the bacterial ribosomal protein bL20 family.

Its function is as follows. Binds directly to 23S ribosomal RNA and is necessary for the in vitro assembly process of the 50S ribosomal subunit. It is not involved in the protein synthesizing functions of that subunit. The chain is Large ribosomal subunit protein bL20 from Pseudomonas entomophila (strain L48).